Consider the following 322-residue polypeptide: Phosphatidylserine decarboxylase proenzyme (322 aa).

Residues Asp-90, His-147, and Ser-254 each act as charge relay system; for autoendoproteolytic cleavage activity in the active site. Residue Ser-254 is the Schiff-base intermediate with substrate; via pyruvic acid; for decarboxylase activity of the active site. A Pyruvic acid (Ser); by autocatalysis modification is found at Ser-254. The segment at 293–322 (PDAEPAPLPAEEIEAEHDASPLVDDKKDQV) is disordered. Over residues 308-322 (EHDASPLVDDKKDQV) the composition is skewed to basic and acidic residues.

This sequence belongs to the phosphatidylserine decarboxylase family. PSD-B subfamily. Prokaryotic type I sub-subfamily. Heterodimer of a large membrane-associated beta subunit and a small pyruvoyl-containing alpha subunit. Pyruvate is required as a cofactor. In terms of processing, is synthesized initially as an inactive proenzyme. Formation of the active enzyme involves a self-maturation process in which the active site pyruvoyl group is generated from an internal serine residue via an autocatalytic post-translational modification. Two non-identical subunits are generated from the proenzyme in this reaction, and the pyruvate is formed at the N-terminus of the alpha chain, which is derived from the carboxyl end of the proenzyme. The autoendoproteolytic cleavage occurs by a canonical serine protease mechanism, in which the side chain hydroxyl group of the serine supplies its oxygen atom to form the C-terminus of the beta chain, while the remainder of the serine residue undergoes an oxidative deamination to produce ammonia and the pyruvoyl prosthetic group on the alpha chain. During this reaction, the Ser that is part of the protease active site of the proenzyme becomes the pyruvoyl prosthetic group, which constitutes an essential element of the active site of the mature decarboxylase.

It is found in the cell membrane. The catalysed reaction is a 1,2-diacyl-sn-glycero-3-phospho-L-serine + H(+) = a 1,2-diacyl-sn-glycero-3-phosphoethanolamine + CO2. It functions in the pathway phospholipid metabolism; phosphatidylethanolamine biosynthesis; phosphatidylethanolamine from CDP-diacylglycerol: step 2/2. Functionally, catalyzes the formation of phosphatidylethanolamine (PtdEtn) from phosphatidylserine (PtdSer). This is Phosphatidylserine decarboxylase proenzyme from Escherichia coli O45:K1 (strain S88 / ExPEC).